Here is a 104-residue protein sequence, read N- to C-terminus: Putative pterin-4-alpha-carbinolamine dehydratase (104 aa).

It belongs to the pterin-4-alpha-carbinolamine dehydratase family.

The catalysed reaction is (4aS,6R)-4a-hydroxy-L-erythro-5,6,7,8-tetrahydrobiopterin = (6R)-L-erythro-6,7-dihydrobiopterin + H2O. This is Putative pterin-4-alpha-carbinolamine dehydratase (pcbD) from Rhizobium meliloti (strain 1021) (Ensifer meliloti).